The sequence spans 385 residues: FAD-dependent monooxygenase verC2 (385 aa).

FAD-binding residues include arginine 27, aspartate 227, and alanine 240. Residue asparagine 320 is glycosylated (N-linked (GlcNAc...) asparagine). The helical transmembrane segment at 365–385 threads the bilayer; the sequence is WKTTIMFIALLTIVVLIYSFI.

Belongs to the paxM FAD-dependent monooxygenase family. FAD serves as cofactor.

It localises to the membrane. It participates in secondary metabolite biosynthesis; terpenoid biosynthesis. The protein operates within mycotoxin biosynthesis. Functionally, FAD-dependent monooxygenase; part of the gene cluster that mediates the biosynthesis of the neurotoxin verrucosidin, a methylated alpha-pyrone polyketide that inhibits oxidative phosphorylation in mitochondria and thereby causes neurological diseases. The carbon backbone of verrucosidin is synthesized by the HR-PKS verA, and further modified by the other verrucodidin cluster enzymes. This Penicillium polonicum protein is FAD-dependent monooxygenase verC2.